The sequence spans 98 residues: Beta-elicitin DRE-beta (98 aa).

3 disulfides stabilise this stretch: cysteine 3-cysteine 71, cysteine 27-cysteine 56, and cysteine 51-cysteine 95.

The protein belongs to the elicitin family.

Its subcellular location is the secreted. Induces local and distal defense responses (incompatible hypersensitive reaction) in plants from the solanaceae and cruciferae families. Elicits leaf necrosis and causes the accumulation of pathogenesis-related proteins. Might interact with the lipidic molecules of the plasma membrane. The protein is Beta-elicitin DRE-beta of Phytophthora drechsleri.